The chain runs to 229 residues: Flagellar L-ring protein (229 aa).

The first 25 residues, 1-25 (MKQVRLPSSATVRAACAVAVAALAG), serve as a signal peptide directing secretion. A lipid anchor (N-palmitoyl cysteine) is attached at cysteine 26. Cysteine 26 is lipidated: S-diacylglycerol cysteine.

Belongs to the FlgH family. As to quaternary structure, the basal body constitutes a major portion of the flagellar organelle and consists of four rings (L,P,S, and M) mounted on a central rod.

It is found in the cell outer membrane. Its subcellular location is the bacterial flagellum basal body. In terms of biological role, assembles around the rod to form the L-ring and probably protects the motor/basal body from shearing forces during rotation. The sequence is that of Flagellar L-ring protein from Burkholderia cenocepacia (strain ATCC BAA-245 / DSM 16553 / LMG 16656 / NCTC 13227 / J2315 / CF5610) (Burkholderia cepacia (strain J2315)).